Here is a 298-residue protein sequence, read N- to C-terminus: N-acetylmuramic acid 6-phosphate etherase (298 aa).

Positions Ile55–Lys218 constitute an SIS domain. The active-site Proton donor is the Glu83. Residue Glu114 is part of the active site.

Belongs to the GCKR-like family. MurNAc-6-P etherase subfamily. Homodimer.

It carries out the reaction N-acetyl-D-muramate 6-phosphate + H2O = N-acetyl-D-glucosamine 6-phosphate + (R)-lactate. It participates in amino-sugar metabolism; 1,6-anhydro-N-acetylmuramate degradation. The protein operates within amino-sugar metabolism; N-acetylmuramate degradation. It functions in the pathway cell wall biogenesis; peptidoglycan recycling. Its function is as follows. Specifically catalyzes the cleavage of the D-lactyl ether substituent of MurNAc 6-phosphate, producing GlcNAc 6-phosphate and D-lactate. Together with AnmK, is also required for the utilization of anhydro-N-acetylmuramic acid (anhMurNAc) either imported from the medium or derived from its own cell wall murein, and thus plays a role in cell wall recycling. The polypeptide is N-acetylmuramic acid 6-phosphate etherase (Escherichia coli O81 (strain ED1a)).